A 183-amino-acid chain; its full sequence is ATP synthase subunit delta (183 aa).

This sequence belongs to the ATPase delta chain family. As to quaternary structure, F-type ATPases have 2 components, F(1) - the catalytic core - and F(0) - the membrane proton channel. F(1) has five subunits: alpha(3), beta(3), gamma(1), delta(1), epsilon(1). F(0) has three main subunits: a(1), b(2) and c(10-14). The alpha and beta chains form an alternating ring which encloses part of the gamma chain. F(1) is attached to F(0) by a central stalk formed by the gamma and epsilon chains, while a peripheral stalk is formed by the delta and b chains.

The protein localises to the cell membrane. In terms of biological role, f(1)F(0) ATP synthase produces ATP from ADP in the presence of a proton or sodium gradient. F-type ATPases consist of two structural domains, F(1) containing the extramembraneous catalytic core and F(0) containing the membrane proton channel, linked together by a central stalk and a peripheral stalk. During catalysis, ATP synthesis in the catalytic domain of F(1) is coupled via a rotary mechanism of the central stalk subunits to proton translocation. Functionally, this protein is part of the stalk that links CF(0) to CF(1). It either transmits conformational changes from CF(0) to CF(1) or is implicated in proton conduction. In Halalkalibacterium halodurans (strain ATCC BAA-125 / DSM 18197 / FERM 7344 / JCM 9153 / C-125) (Bacillus halodurans), this protein is ATP synthase subunit delta.